Here is a 616-residue protein sequence, read N- to C-terminus: Replication protein A 70 kDa DNA-binding subunit (616 aa).

Methionine 1 bears the N-acetylmethionine mark. Glycyl lysine isopeptide (Lys-Gly) (interchain with G-Cter in ubiquitin) cross-links involve residues lysine 22 and lysine 88. Residues 121 to 155 (GLGQPQVAPPAPAASPAASSRPQPQNGTSGAGSTV) form a disordered region. Positions 134–145 (ASPAASSRPQPQ) are enriched in low complexity. The span at 146–155 (NGTSGAGSTV) shows a compositional bias: polar residues. N6-acetyllysine; alternate occurs at positions 163 and 167. Glycyl lysine isopeptide (Lys-Gly) (interchain with G-Cter in ubiquitin); alternate cross-links involve residues lysine 163 and lysine 167. The residue at position 180 (threonine 180) is a Phosphothreonine. Residue lysine 183 forms a Glycyl lysine isopeptide (Lys-Gly) (interchain with G-Cter in ubiquitin) linkage. At threonine 191 the chain carries Phosphothreonine. Positions 197–281 (WTICARVTNK…VKNDYEMTFN (85 aa)) form a DNA-binding region, OB. Residues lysine 220 and lysine 244 each participate in a glycyl lysine isopeptide (Lys-Gly) (interchain with G-Cter in ubiquitin) cross-link. Lysine 259 is subject to N6-acetyllysine; alternate. Lysine 259 participates in a covalent cross-link: Glycyl lysine isopeptide (Lys-Gly) (interchain with G-Cter in ubiquitin); alternate. Residues lysine 267 and lysine 331 each participate in a glycyl lysine isopeptide (Lys-Gly) (interchain with G-Cter in ubiquitin) cross-link. The residue at position 384 (serine 384) is a Phosphoserine. Residues lysine 410 and lysine 431 each participate in a glycyl lysine isopeptide (Lys-Gly) (interchain with G-Cter in ubiquitin) cross-link. Residue lysine 449 forms a Glycyl lysine isopeptide (Lys-Gly) (interchain with G-Cter in SUMO) linkage. Lysine 458 is covalently cross-linked (Glycyl lysine isopeptide (Lys-Gly) (interchain with G-Cter in ubiquitin)). The C4-type zinc finger occupies 481 to 503 (CPTQDCNKKVIDQQNGLYRCEKC). Lysine 553 participates in a covalent cross-link: Glycyl lysine isopeptide (Lys-Gly) (interchain with G-Cter in ubiquitin). Lysine 577 participates in a covalent cross-link: Glycyl lysine isopeptide (Lys-Gly) (interchain with G-Cter in SUMO).

The protein belongs to the replication factor A protein 1 family. Component of the canonical replication protein A complex (RPA), a heterotrimer composed of RPA1, RPA2 and RPA3. The DNA-binding activity may reside exclusively on the RPA1 subunit. Interacts with PRPF19; the PRP19-CDC5L complex is recruited to the sites of DNA repair where it ubiquitinates the replication protein A complex (RPA). Interacts with RIPK1. Interacts with the polymerase alpha subunit POLA1/p180; this interaction stabilizes the replicative complex and reduces the misincorporation rate of DNA polymerase alpha by acting as a fidelity clamp. Interacts with RAD51 and SENP6 to regulate DNA repair. Interacts with HELB; this interaction promotes HELB recruitment to chromatin following DNA damage. Interacts with PRIMPOL; leading to recruit PRIMPOL on chromatin and stimulate its DNA primase activity. Interacts with XPA; the interaction is direct and associates XPA with the RPA complex. Interacts with ETAA1; the interaction is direct and promotes ETAA1 recruitment at stalled replication forks. Interacts with RPA1; this interaction associates HROB with the RPA complex. Interacts (when poly-ADP-ribosylated) with HTATSF1. DNA damage-induced 'Lys-63'-linked polyubiquitination by PRPF19 mediates ATRIP recruitment to the RPA complex at sites of DNA damage and activation of ATR. Ubiquitinated by RFWD3 at stalled replication forks in response to DNA damage: ubiquitination by RFWD3 does not lead to degradation by the proteasome and promotes removal of the RPA complex from stalled replication forks, promoting homologous recombination. Post-translationally, sumoylated on lysine residues Lys-449 and Lys-577, with Lys-449 being the major site. Sumoylation promotes recruitment of RAD51 to the DNA damage foci to initiate DNA repair through homologous recombination. Desumoylated by SENP6. In terms of processing, poly-ADP-ribosylated by PARP1; promoting recruitment of HTATSF1.

It is found in the nucleus. Its subcellular location is the PML body. In terms of biological role, as part of the heterotrimeric replication protein A complex (RPA/RP-A), binds and stabilizes single-stranded DNA intermediates, that form during DNA replication or upon DNA stress. It prevents their reannealing and in parallel, recruits and activates different proteins and complexes involved in DNA metabolism. Thereby, it plays an essential role both in DNA replication and the cellular response to DNA damage. In the cellular response to DNA damage, the RPA complex controls DNA repair and DNA damage checkpoint activation. Through recruitment of ATRIP activates the ATR kinase a master regulator of the DNA damage response. It is required for the recruitment of the DNA double-strand break repair factors RAD51 and RAD52 to chromatin in response to DNA damage. Also recruits to sites of DNA damage proteins like XPA and XPG that are involved in nucleotide excision repair and is required for this mechanism of DNA repair. Also plays a role in base excision repair (BER) probably through interaction with UNG. Also recruits SMARCAL1/HARP, which is involved in replication fork restart, to sites of DNA damage. May also play a role in telomere maintenance. The protein is Replication protein A 70 kDa DNA-binding subunit (RPA1) of Pongo abelii (Sumatran orangutan).